The chain runs to 210 residues: Casparian strip membrane protein 1 (210 aa).

The tract at residues 1 to 25 (MEKSEATTIDVAETSRESKGKAPLL) is disordered. Topologically, residues 1–48 (MEKSEATTIDVAETSRESKGKAPLLRDPPAWVPAAVERQRAAPAYKRG) are cytoplasmic. A helical transmembrane segment spans residues 49–69 (VAIFDLILRISAATAALAATI). Residues 70-98 (TMGTTEQTLPFFTQFFQFQASYDDLPTFT) lie on the Extracellular side of the membrane. Residues 99–119 (FFVIAMSIVTGYLVLSVPFSI) traverse the membrane as a helical segment. At 120–138 (VCIARPVAAAPRLLLILCD) the chain is on the cytoplasmic side. Residues 139–159 (TLAVTLNTSAAGASAAIVYLA) form a helical membrane-spanning segment. Topologically, residues 160–183 (HNGNSDANWLAICQQFNDFCQRTS) are extracellular. The chain crosses the membrane as a helical span at residues 184-204 (GAVVASFVAVVLLIFLVVLSA). Over 205–210 (SALKKH) the chain is Cytoplasmic.

This sequence belongs to the Casparian strip membrane proteins (CASP) family. In terms of assembly, homodimer and heterodimers.

It is found in the cell membrane. Regulates membrane-cell wall junctions and localized cell wall deposition. Required for establishment of the Casparian strip membrane domain (CSD) and the subsequent formation of Casparian strips, a cell wall modification of the root endodermis that determines an apoplastic barrier between the intraorganismal apoplasm and the extraorganismal apoplasm and prevents lateral diffusion. This chain is Casparian strip membrane protein 1, found in Erythranthe guttata (Yellow monkey flower).